The chain runs to 253 residues: 5-oxoprolinase subunit A (253 aa).

This sequence belongs to the LamB/PxpA family. In terms of assembly, forms a complex composed of PxpA, PxpB and PxpC.

It carries out the reaction 5-oxo-L-proline + ATP + 2 H2O = L-glutamate + ADP + phosphate + H(+). Functionally, catalyzes the cleavage of 5-oxoproline to form L-glutamate coupled to the hydrolysis of ATP to ADP and inorganic phosphate. The polypeptide is 5-oxoprolinase subunit A (Shouchella clausii (strain KSM-K16) (Alkalihalobacillus clausii)).